Reading from the N-terminus, the 100-residue chain is Urease subunit gamma (100 aa).

The protein belongs to the urease gamma subunit family. As to quaternary structure, heterotrimer of UreA (gamma), UreB (beta) and UreC (alpha) subunits. Three heterotrimers associate to form the active enzyme.

Its subcellular location is the cytoplasm. The enzyme catalyses urea + 2 H2O + H(+) = hydrogencarbonate + 2 NH4(+). It participates in nitrogen metabolism; urea degradation; CO(2) and NH(3) from urea (urease route): step 1/1. In Mycobacteroides abscessus (strain ATCC 19977 / DSM 44196 / CCUG 20993 / CIP 104536 / JCM 13569 / NCTC 13031 / TMC 1543 / L948) (Mycobacterium abscessus), this protein is Urease subunit gamma.